The following is a 482-amino-acid chain: MEGFKLIKVLFATSEANPFIKTGGLGDVMGALPKELKRKGIDARVILPKYSAIKGELLDKLSFKKWFMVPVGWRNQYCGVYQCEYDEVIYYLLDSEFYFHRNGLYGEGDDGERFAFFDRAVLETLKEIDWCPDIIHCNDWQTGMIPVLHKLEYSKDPFYKNIKTVTSIHNLLFQGNFSADVLPELFGYDYEPVRNGSLEFYGGMSFMKGAINYSDRILTVSETYAKEIKTPYFGENLDGLLRERGYALKGIVNGIDYDEFNPSKDSLIAKNFSVKTIEDKVLNKLALQKELGLPINPDIPMISIVSRLTNQKGCDLIVNIANRLLQRNVQLVILGTGDYNYENHFKGLQELYPTKVSANIKFDNGLAHRIYASSDIFLMPSLFEPCGLGQLIALRYGAIPIVRETGGLKDTIHSYNKYTGIGNGFSFTNYNHNDLMHVIELALETYDDKEIWRSLIIQAMDSDNSWNKSAEKYKELYEELIK.

Lys-21 contributes to the ADP-alpha-D-glucose binding site.

It belongs to the glycosyltransferase 1 family. Bacterial/plant glycogen synthase subfamily.

The enzyme catalyses [(1-&gt;4)-alpha-D-glucosyl](n) + ADP-alpha-D-glucose = [(1-&gt;4)-alpha-D-glucosyl](n+1) + ADP + H(+). Its pathway is glycan biosynthesis; glycogen biosynthesis. Its function is as follows. Synthesizes alpha-1,4-glucan chains using ADP-glucose. The polypeptide is Glycogen synthase (Clostridium perfringens (strain 13 / Type A)).